Here is a 396-residue protein sequence, read N- to C-terminus: Putative 2-hydroxyacid dehydrogenase YPL113C (396 aa).

NAD(+) is bound by residues 227–228, 311–313, and Asp337; these read SI and VGR. Residue Arg313 is part of the active site. The active site involves Glu342. Residue His361 is the Proton donor of the active site. 361-364 provides a ligand contact to NAD(+); it reads HIGS.

Belongs to the D-isomer specific 2-hydroxyacid dehydrogenase family.

In terms of biological role, putative 2-hydroxyacid dehydrogenase. The polypeptide is Putative 2-hydroxyacid dehydrogenase YPL113C (Saccharomyces cerevisiae (strain ATCC 204508 / S288c) (Baker's yeast)).